The following is a 612-amino-acid chain: Threonine--tRNA ligase (612 aa).

Residues 218-509 (DHRKLGVELG…LSEHFGGNFP (292 aa)) are catalytic. Positions 310, 361, and 486 each coordinate Zn(2+).

Belongs to the class-II aminoacyl-tRNA synthetase family. As to quaternary structure, homodimer. The cofactor is Zn(2+).

Its subcellular location is the cytoplasm. It catalyses the reaction tRNA(Thr) + L-threonine + ATP = L-threonyl-tRNA(Thr) + AMP + diphosphate + H(+). In terms of biological role, catalyzes the attachment of threonine to tRNA(Thr) in a two-step reaction: L-threonine is first activated by ATP to form Thr-AMP and then transferred to the acceptor end of tRNA(Thr). Also edits incorrectly charged L-seryl-tRNA(Thr). This Helicobacter pylori (strain G27) protein is Threonine--tRNA ligase.